Consider the following 947-residue polypeptide: Translation initiation factor IF-2 (947 aa).

The tract at residues 55 to 361 is disordered; that stretch reads TKDAQAGSAK…PVTERKFHEL (307 aa). Residues 63–73 are compositionally biased toward basic and acidic residues; sequence AKDKQVAEQKA. Positions 76–90 are enriched in low complexity; the sequence is AKATTPQPAAATQEA. Basic and acidic residues-rich tracts occupy residues 103–116, 125–134, and 170–183; these read FKAE…EQAA, SNDRKSDYRQ, and NDGH…DKNR. Low complexity predominate over residues 190–204; that stretch reads RQQDTGRQGQTQAGA. Basic and acidic residues-rich tracts occupy residues 225–249, 257–267, and 294–311; these read ARQR…RQEA, QTEDKKHREAS, and NRPD…DGQK. Residues 316 to 334 are compositionally biased toward low complexity; the sequence is SWNSQNQVRNQKNSNWNNN. Over residues 335 to 345 the composition is skewed to basic residues; that stretch reads KKNKKGKHHKN. The 170-residue stretch at 448–617 folds into the tr-type G domain; the sequence is ERAPVVTIMG…LLVAEVEELK (170 aa). The interval 457–464 is G1; sequence GHVDHGKT. A GTP-binding site is contributed by 457 to 464; that stretch reads GHVDHGKT. A G2 region spans residues 482 to 486; the sequence is GITQH. Positions 503–506 are G3; the sequence is DTPG. Residues 503–507 and 557–560 contribute to the GTP site; these read DTPGH and NKID. The interval 557-560 is G4; the sequence is NKID. The G5 stretch occupies residues 593 to 595; sequence SAK.

Belongs to the TRAFAC class translation factor GTPase superfamily. Classic translation factor GTPase family. IF-2 subfamily.

It localises to the cytoplasm. In terms of biological role, one of the essential components for the initiation of protein synthesis. Protects formylmethionyl-tRNA from spontaneous hydrolysis and promotes its binding to the 30S ribosomal subunits. Also involved in the hydrolysis of GTP during the formation of the 70S ribosomal complex. This chain is Translation initiation factor IF-2, found in Streptococcus equi subsp. zooepidemicus (strain MGCS10565).